The following is a 673-amino-acid chain: UvrABC system protein B (673 aa).

A Helicase ATP-binding domain is found at 26–415; the sequence is EGLEDGLAHQ…GDVVDQVVRP (390 aa). 39 to 46 contacts ATP; sequence GVTGSGKT. Positions 92-115 match the Beta-hairpin motif; that stretch reads YYDYYQPEAYVPSSDTFIEKDASV. Residues 431–597 form the Helicase C-terminal domain; it reads QVDDLLSEIR…GLNKKVVDIL (167 aa). The interval 608-627 is disordered; the sequence is AKGRGKSRPIVEPDNVPMDM. The 36-residue stretch at 633-668 folds into the UVR domain; the sequence is QQKIHELEGLMMQHAQNLEFEEAAQIRDQLHQLREL.

This sequence belongs to the UvrB family. Forms a heterotetramer with UvrA during the search for lesions. Interacts with UvrC in an incision complex.

The protein localises to the cytoplasm. In terms of biological role, the UvrABC repair system catalyzes the recognition and processing of DNA lesions. A damage recognition complex composed of 2 UvrA and 2 UvrB subunits scans DNA for abnormalities. Upon binding of the UvrA(2)B(2) complex to a putative damaged site, the DNA wraps around one UvrB monomer. DNA wrap is dependent on ATP binding by UvrB and probably causes local melting of the DNA helix, facilitating insertion of UvrB beta-hairpin between the DNA strands. Then UvrB probes one DNA strand for the presence of a lesion. If a lesion is found the UvrA subunits dissociate and the UvrB-DNA preincision complex is formed. This complex is subsequently bound by UvrC and the second UvrB is released. If no lesion is found, the DNA wraps around the other UvrB subunit that will check the other stand for damage. The sequence is that of UvrABC system protein B from Escherichia coli O6:H1 (strain CFT073 / ATCC 700928 / UPEC).